Consider the following 251-residue polypeptide: Haloacid dehalogenase-like hydrolase domain-containing protein 3 (251 aa).

Lysine 15 is subject to N6-acetyllysine; alternate. Lysine 15 is subject to N6-succinyllysine; alternate. Residue lysine 130 is modified to N6-acetyllysine.

It belongs to the HAD-like hydrolase superfamily.

This chain is Haloacid dehalogenase-like hydrolase domain-containing protein 3 (HDHD3), found in Bos taurus (Bovine).